A 247-amino-acid chain; its full sequence is Adenosylcobinamide-GDP ribazoletransferase (247 aa).

Transmembrane regions (helical) follow at residues 34 to 54 (IITF…VFMV), 59 to 79 (CGAP…TGGF), 113 to 133 (GGLA…ELAL), 138 to 158 (ILAS…LLMY), and 194 to 214 (VLLP…AIFI).

Belongs to the CobS family. The cofactor is Mg(2+).

It is found in the cell inner membrane. It catalyses the reaction alpha-ribazole + adenosylcob(III)inamide-GDP = adenosylcob(III)alamin + GMP + H(+). The enzyme catalyses alpha-ribazole 5'-phosphate + adenosylcob(III)inamide-GDP = adenosylcob(III)alamin 5'-phosphate + GMP + H(+). It functions in the pathway cofactor biosynthesis; adenosylcobalamin biosynthesis; adenosylcobalamin from cob(II)yrinate a,c-diamide: step 7/7. In terms of biological role, joins adenosylcobinamide-GDP and alpha-ribazole to generate adenosylcobalamin (Ado-cobalamin). Also synthesizes adenosylcobalamin 5'-phosphate from adenosylcobinamide-GDP and alpha-ribazole 5'-phosphate. In Escherichia coli O81 (strain ED1a), this protein is Adenosylcobinamide-GDP ribazoletransferase.